Here is a 98-residue protein sequence, read N- to C-terminus: MALTKAEMAEHLFETLGINKRVAKEMVETFFEEIRQALESGEQVKLSGFGNFDLRDKNQRPGRNPKTGEDIPISARRVVTFRPGQKLKSRVEEANAKK.

The interval 49-71 (FGNFDLRDKNQRPGRNPKTGEDI) is disordered.

The protein belongs to the bacterial histone-like protein family. As to quaternary structure, heterodimer of an alpha and a beta chain.

Its function is as follows. This protein is one of the two subunits of integration host factor, a specific DNA-binding protein that functions in genetic recombination as well as in transcriptional and translational control. The protein is Integration host factor subunit alpha of Shewanella halifaxensis (strain HAW-EB4).